Reading from the N-terminus, the 690-residue chain is Eukaryotic translation initiation factor 3 subunit B (690 aa).

The disordered stretch occupies residues 1 to 37 (MAKKKSEEQSSADANDSDYQEEPNFEDPPGFVDNISD). Residues 15–25 (NDSDYQEEPNF) show a composition bias toward acidic residues. An RRM domain is found at 57–141 (SVVVVDNIPK…HTFAVNLFTD (85 aa)). WD repeat units lie at residues 207–246 (TRER…KIQK), 293–331 (DGMS…LLDL), 334–369 (IKIP…TLME), 442–484 (EIRE…KPSL), and 530–575 (PDHF…IKRT). The stretch at 595–645 (EEKQKEIKKNLKKYYAAFEQKDRLRLTRASKELLEKRSQLRETFMEYRNKR) forms a coiled coil.

It belongs to the eIF-3 subunit B family. Component of the eukaryotic translation initiation factor 3 (eIF-3) complex. The eIF-3 complex interacts with pix. Interacts with mxt.

The protein resides in the cytoplasm. Functionally, RNA-binding component of the eukaryotic translation initiation factor 3 (eIF-3) complex, which is involved in protein synthesis of a specialized repertoire of mRNAs and, together with other initiation factors, stimulates binding of mRNA and methionyl-tRNAi to the 40S ribosome. The eIF-3 complex specifically targets and initiates translation of a subset of mRNAs involved in cell proliferation. The chain is Eukaryotic translation initiation factor 3 subunit B from Drosophila sechellia (Fruit fly).